Here is a 355-residue protein sequence, read N- to C-terminus: Peptide chain release factor 1 (355 aa).

Gln233 is modified (N5-methylglutamine).

It belongs to the prokaryotic/mitochondrial release factor family. In terms of processing, methylated by PrmC. Methylation increases the termination efficiency of RF1.

The protein localises to the cytoplasm. Functionally, peptide chain release factor 1 directs the termination of translation in response to the peptide chain termination codons UAG and UAA. This chain is Peptide chain release factor 1, found in Rickettsia typhi (strain ATCC VR-144 / Wilmington).